The following is a 174-amino-acid chain: Pituitary tumor-transforming gene 1 protein-interacting protein (174 aa).

An N-terminal signal peptide occupies residues 1 to 29 (MASAVLGLTLRWVMFLSAVLLLLLPGASA). The Extracellular segment spans residues 30-93 (QEPPGVGCSE…RWGVCWVNFE (64 aa)). The PSI domain maps to 36-89 (GCSEYTNRSCEECLRNVSCLWCNENKACLDYPVRKILPPASLCKLSSARWGVCW). Asn-42 and Asn-51 each carry an N-linked (GlcNAc...) asparagine glycan. A helical transmembrane segment spans residues 94 to 114 (ALIITMSVLGGSVLLGITVCC). At 115–174 (CCCCRRKRSRKPDKSDERAMREQEERRVRQEERRAEMKSRHDEIRKKYGLFKEQNPYEKF) the chain is on the cytoplasmic side. The interval 126–155 (PDKSDERAMREQEERRVRQEERRAEMKSRH) is disordered. The stretch at 127–163 (DKSDERAMREQEERRVRQEERRAEMKSRHDEIRKKYG) forms a coiled coil. Tyr-171 carries the post-translational modification Phosphotyrosine.

As to quaternary structure, interacts with PTTG1.

The protein localises to the cell membrane. It is found in the cytoplasm. Its subcellular location is the nucleus. In terms of biological role, may facilitate PTTG1 nuclear translocation. The sequence is that of Pituitary tumor-transforming gene 1 protein-interacting protein (Pttg1ip) from Rattus norvegicus (Rat).